An 82-amino-acid polypeptide reads, in one-letter code: Lectin-D2 (82 aa).

Chitin-binding type-1 domains are found at residues 1–42 (APEC…QCDY) and 43–82 (WRCG…SQCD). 4 disulfide bridges follow: C4–C19, C13–C25, C18–C32, and C36–C40. Positions 20, 22, 24, and 31 each coordinate a carbohydrate. W43 contacts a carbohydrate. Intrachain disulfides connect C45-C60, C54-C66, C59-C73, and C77-C81. A carbohydrate contacts are provided by S61, Y63, W65, and H72.

In terms of assembly, monomer.

In terms of biological role, N-acetyl-D-glucosamine binding lectin. Shows no hemagglutinating activity towards rabbit erythrocytes and weak activity towards trypsin-treated erythrocytes. Has mitogenic activity towards human peripheral blood lymphocytes (HPBL). The sequence is that of Lectin-D2 from Phytolacca americana (American pokeweed).